The chain runs to 87 residues: Small ribosomal subunit protein bS20 (87 aa).

This sequence belongs to the bacterial ribosomal protein bS20 family.

In terms of biological role, binds directly to 16S ribosomal RNA. This chain is Small ribosomal subunit protein bS20, found in Rickettsia bellii (strain OSU 85-389).